A 544-amino-acid polypeptide reads, in one-letter code: Chaperonin GroEL (544 aa).

ATP is bound by residues 29–32, 86–90, G413, 476–478, and D492; these read TLGP, DGTTT, and NAA.

This sequence belongs to the chaperonin (HSP60) family. As to quaternary structure, forms a cylinder of 14 subunits composed of two heptameric rings stacked back-to-back. Interacts with the co-chaperonin GroES.

It localises to the cytoplasm. The catalysed reaction is ATP + H2O + a folded polypeptide = ADP + phosphate + an unfolded polypeptide.. Functionally, together with its co-chaperonin GroES, plays an essential role in assisting protein folding. The GroEL-GroES system forms a nano-cage that allows encapsulation of the non-native substrate proteins and provides a physical environment optimized to promote and accelerate protein folding. The protein is Chaperonin GroEL of Halalkalibacterium halodurans (strain ATCC BAA-125 / DSM 18197 / FERM 7344 / JCM 9153 / C-125) (Bacillus halodurans).